A 164-amino-acid chain; its full sequence is SsrA-binding protein (164 aa).

The protein belongs to the SmpB family.

The protein resides in the cytoplasm. In terms of biological role, required for rescue of stalled ribosomes mediated by trans-translation. Binds to transfer-messenger RNA (tmRNA), required for stable association of tmRNA with ribosomes. tmRNA and SmpB together mimic tRNA shape, replacing the anticodon stem-loop with SmpB. tmRNA is encoded by the ssrA gene; the 2 termini fold to resemble tRNA(Ala) and it encodes a 'tag peptide', a short internal open reading frame. During trans-translation Ala-aminoacylated tmRNA acts like a tRNA, entering the A-site of stalled ribosomes, displacing the stalled mRNA. The ribosome then switches to translate the ORF on the tmRNA; the nascent peptide is terminated with the 'tag peptide' encoded by the tmRNA and targeted for degradation. The ribosome is freed to recommence translation, which seems to be the essential function of trans-translation. The sequence is that of SsrA-binding protein from Gluconobacter oxydans (strain 621H) (Gluconobacter suboxydans).